The primary structure comprises 160 residues: SsrA-binding protein (160 aa).

Residues 132-160 (KEFDKRDTVRERDSNRELQRTMRNKGKEE) form a disordered region.

This sequence belongs to the SmpB family.

It is found in the cytoplasm. In terms of biological role, required for rescue of stalled ribosomes mediated by trans-translation. Binds to transfer-messenger RNA (tmRNA), required for stable association of tmRNA with ribosomes. tmRNA and SmpB together mimic tRNA shape, replacing the anticodon stem-loop with SmpB. tmRNA is encoded by the ssrA gene; the 2 termini fold to resemble tRNA(Ala) and it encodes a 'tag peptide', a short internal open reading frame. During trans-translation Ala-aminoacylated tmRNA acts like a tRNA, entering the A-site of stalled ribosomes, displacing the stalled mRNA. The ribosome then switches to translate the ORF on the tmRNA; the nascent peptide is terminated with the 'tag peptide' encoded by the tmRNA and targeted for degradation. The ribosome is freed to recommence translation, which seems to be the essential function of trans-translation. The sequence is that of SsrA-binding protein from Pseudomonas entomophila (strain L48).